Here is a 341-residue protein sequence, read N- to C-terminus: tRNA N6-adenosine threonylcarbamoyltransferase (341 aa).

Residues histidine 117 and histidine 121 each coordinate Fe cation. Substrate contacts are provided by residues 140-144 (VVSGG), aspartate 173, glycine 186, and asparagine 278. Aspartate 306 serves as a coordination point for Fe cation.

Belongs to the KAE1 / TsaD family. Fe(2+) serves as cofactor.

It localises to the cytoplasm. The enzyme catalyses L-threonylcarbamoyladenylate + adenosine(37) in tRNA = N(6)-L-threonylcarbamoyladenosine(37) in tRNA + AMP + H(+). Its function is as follows. Required for the formation of a threonylcarbamoyl group on adenosine at position 37 (t(6)A37) in tRNAs that read codons beginning with adenine. Is involved in the transfer of the threonylcarbamoyl moiety of threonylcarbamoyl-AMP (TC-AMP) to the N6 group of A37, together with TsaE and TsaB. TsaD likely plays a direct catalytic role in this reaction. The protein is tRNA N6-adenosine threonylcarbamoyltransferase of Symbiobacterium thermophilum (strain DSM 24528 / JCM 14929 / IAM 14863 / T).